Consider the following 756-residue polypeptide: Putative beta-xylosidase (756 aa).

The N-terminal stretch at 1–18 is a signal peptide; that stretch reads MKKLLFTFLVSTGTIFFS. The N-palmitoyl cysteine moiety is linked to residue cysteine 19. A lipid anchor (S-diacylglycerol cysteine) is attached at cysteine 19.

The protein belongs to the glycosyl hydrolase 3 family.

It is found in the cell outer membrane. Its function is as follows. Glycoside hydrolase probably involved in ulvan degradation. Ulvan is the main polysaccharide component of the Ulvales (green seaweed) cell wall. It is composed of disaccharide building blocks comprising 3-sulfated rhamnose (Rha3S) linked to D-glucuronic acid (GlcA), L-iduronic acid (IduA), or D-xylose (Xyl). This Formosa agariphila (strain DSM 15362 / KCTC 12365 / LMG 23005 / KMM 3901 / M-2Alg 35-1) protein is Putative beta-xylosidase.